The sequence spans 98 residues: Putative pterin-4-alpha-carbinolamine dehydratase (98 aa).

The protein belongs to the pterin-4-alpha-carbinolamine dehydratase family.

The enzyme catalyses (4aS,6R)-4a-hydroxy-L-erythro-5,6,7,8-tetrahydrobiopterin = (6R)-L-erythro-6,7-dihydrobiopterin + H2O. This is Putative pterin-4-alpha-carbinolamine dehydratase from Roseobacter denitrificans (strain ATCC 33942 / OCh 114) (Erythrobacter sp. (strain OCh 114)).